We begin with the raw amino-acid sequence, 312 residues long: Glycine--tRNA ligase alpha subunit (312 aa).

Belongs to the class-II aminoacyl-tRNA synthetase family. Tetramer of two alpha and two beta subunits.

It localises to the cytoplasm. The enzyme catalyses tRNA(Gly) + glycine + ATP = glycyl-tRNA(Gly) + AMP + diphosphate. The sequence is that of Glycine--tRNA ligase alpha subunit from Delftia acidovorans (strain DSM 14801 / SPH-1).